The chain runs to 203 residues: MQERMAKNVIEISRTTKETDISLKLLVYGNGNAQIQSGIGFFDHMLQSLTKHSLIDLELACKGDTFIDGHHSVEDCGIVLGQGLAQGIYPAAGIERFGNASIVMDEACVECDIDVSNRAFLVFETNAYKLPFKGRVGELDVELVEEFFRALCFNAHLSAHIVLKRGKNLHHIIEAMFKAFGVSLRRALTLNPRILTPSTKGVL.

This sequence belongs to the imidazoleglycerol-phosphate dehydratase family.

The protein localises to the cytoplasm. It catalyses the reaction D-erythro-1-(imidazol-4-yl)glycerol 3-phosphate = 3-(imidazol-4-yl)-2-oxopropyl phosphate + H2O. Its pathway is amino-acid biosynthesis; L-histidine biosynthesis; L-histidine from 5-phospho-alpha-D-ribose 1-diphosphate: step 6/9. This Helicobacter hepaticus (strain ATCC 51449 / 3B1) protein is Imidazoleglycerol-phosphate dehydratase.